The following is a 393-amino-acid chain: GDP-4-keto-6-deoxy-D-mannose 3-dehydratase (393 aa).

Position 30-33 (30-33 (NMFT)) interacts with GDP-4-dehydro-alpha-D-rhamnose. A helical transmembrane segment spans residues 53 to 73 (YSVMVSSGSTANLLMIAALFF). Pyridoxal 5'-phosphate-binding positions include 60–61 (GS), W92, E166, and S187. H192 serves as the catalytic Proton donor/acceptor. H219 lines the L-glutamate pocket. R223 contacts GDP-4-dehydro-alpha-D-rhamnose. A pyridoxal 5'-phosphate-binding site is contributed by N252. R254 provides a ligand contact to L-glutamate. E333 contacts GDP-4-dehydro-alpha-D-rhamnose.

It belongs to the DegT/DnrJ/EryC1 family. Homodimer. It depends on pyridoxal 5'-phosphate as a cofactor.

The protein localises to the cell membrane. The catalysed reaction is GDP-4-dehydro-alpha-D-rhamnose + L-glutamate = GDP-4-dehydro-3,6-dideoxy-alpha-D-mannose + 2-oxoglutarate + NH4(+). Its pathway is nucleotide-sugar metabolism; GDP-L-colitose biosynthesis. Involved in the biosynthesis of L-colitose, a 3,6-dideoxyhexose present in the O-antigen region of lipopolysaccharides (LPS), where it serves as an antigenic determinant and is vital for bacterial defense and survival. Catalyzes the removal of the C3'-hydroxyl group from GDP-4-keto-6-deoxy-D-mannose via a combined transamination-deoxygenation reaction. The catalysis is initiated by a transamination step in which pyridoxal 5'-phosphate (PLP) is converted to pyridoxamine 5'-phosphate (PMP) in the presence of L-glutamate. This coenzyme then forms a Schiff base with GDP-4-keto-6-deoxy-D-mannose and the resulting adduct undergoes a PMP-mediated beta-dehydration reaction to give a sugar enamine intermediate, which after tautomerization and hydrolysis to release ammonia yields GDP-4-keto-3,6-dideoxy-D-mannose as a product. This is GDP-4-keto-6-deoxy-D-mannose 3-dehydratase from Yersinia pseudotuberculosis.